A 248-amino-acid polypeptide reads, in one-letter code: tRNA (guanine-N(1)-)-methyltransferase (248 aa).

Residues Gly-113 and 133–138 (IGDFVL) each bind S-adenosyl-L-methionine.

This sequence belongs to the RNA methyltransferase TrmD family. In terms of assembly, homodimer.

The protein resides in the cytoplasm. It catalyses the reaction guanosine(37) in tRNA + S-adenosyl-L-methionine = N(1)-methylguanosine(37) in tRNA + S-adenosyl-L-homocysteine + H(+). Specifically methylates guanosine-37 in various tRNAs. In Dehalococcoides mccartyi (strain ATCC BAA-2266 / KCTC 15142 / 195) (Dehalococcoides ethenogenes (strain 195)), this protein is tRNA (guanine-N(1)-)-methyltransferase.